Reading from the N-terminus, the 306-residue chain is Phosphoribosylaminoimidazole-succinocarboxamide synthase (306 aa).

Ser2 carries the N-acetylserine modification.

Belongs to the SAICAR synthetase family. In terms of assembly, monomer.

It catalyses the reaction 5-amino-1-(5-phospho-D-ribosyl)imidazole-4-carboxylate + L-aspartate + ATP = (2S)-2-[5-amino-1-(5-phospho-beta-D-ribosyl)imidazole-4-carboxamido]succinate + ADP + phosphate + 2 H(+). It participates in purine metabolism; IMP biosynthesis via de novo pathway; 5-amino-1-(5-phospho-D-ribosyl)imidazole-4-carboxamide from 5-amino-1-(5-phospho-D-ribosyl)imidazole-4-carboxylate: step 1/2. Catalyzes the reaction of 4-carboxy-5-aminoimidazole ribotide (CAIR) and aspartic acid with the formation of N-succinyl-5-amino-imidazole-4-carboxamide ribotide (SAICAR) in the purine biosynthesis pathway. The sequence is that of Phosphoribosylaminoimidazole-succinocarboxamide synthase (ADE1) from Saccharomyces cerevisiae (strain ATCC 204508 / S288c) (Baker's yeast).